The primary structure comprises 37 residues: Potassium channel toxin alpha-KTx 15.1 (37 aa).

Residue glutamine 1 is modified to Pyrrolidone carboxylic acid. Cystine bridges form between cysteine 8/cysteine 28, cysteine 13/cysteine 33, and cysteine 17/cysteine 35.

This sequence belongs to the short scorpion toxin superfamily. Potassium channel inhibitor family. Alpha-KTx 15 subfamily. Expressed by the venom gland.

The protein resides in the secreted. Its function is as follows. Blocker of voltage-gated potassium channels (600 nM of the toxin induces a block of 25% of hERG currents). May also inhibit Kv4/KCND when coexpressed with DPP6 or DPP10. In adult rat brain, it blocks the transient potassium channels in cerebellum granular cells. Blocks potassium channels by a simple 'plugging mechanism', in which a single toxin molecule finds a specific receptor site in the external vestibule of the potassium channel and thereby occludes the outer entry to the potassium conducting pore. This chain is Potassium channel toxin alpha-KTx 15.1, found in Androctonus australis (Sahara scorpion).